Reading from the N-terminus, the 152-residue chain is UPF0266 membrane protein Ent638_2389 (152 aa).

The next 3 membrane-spanning stretches (helical) occupy residues 6-26 (IVLV…EFIM), 45-65 (VDAF…VMSQ), and 67-87 (ALLT…LFWI).

The protein belongs to the UPF0266 family.

The protein localises to the cell inner membrane. This is UPF0266 membrane protein Ent638_2389 from Enterobacter sp. (strain 638).